A 245-amino-acid polypeptide reads, in one-letter code: 5-oxoprolinase subunit A (245 aa).

It belongs to the LamB/PxpA family. Forms a complex composed of PxpA, PxpB and PxpC.

It carries out the reaction 5-oxo-L-proline + ATP + 2 H2O = L-glutamate + ADP + phosphate + H(+). In terms of biological role, catalyzes the cleavage of 5-oxoproline to form L-glutamate coupled to the hydrolysis of ATP to ADP and inorganic phosphate. This Neisseria meningitidis serogroup A / serotype 4A (strain DSM 15465 / Z2491) protein is 5-oxoprolinase subunit A.